The primary structure comprises 443 residues: UDP-N-acetylmuramate--L-alanine ligase (443 aa).

110–116 (GAHGKTS) serves as a coordination point for ATP.

This sequence belongs to the MurCDEF family.

The protein localises to the cytoplasm. It carries out the reaction UDP-N-acetyl-alpha-D-muramate + L-alanine + ATP = UDP-N-acetyl-alpha-D-muramoyl-L-alanine + ADP + phosphate + H(+). It participates in cell wall biogenesis; peptidoglycan biosynthesis. Functionally, cell wall formation. This Streptococcus equi subsp. equi (strain 4047) protein is UDP-N-acetylmuramate--L-alanine ligase.